A 92-amino-acid chain; its full sequence is Progonadoliberin-1 (92 aa).

The N-terminal stretch at 1 to 23 (METIPKLMAAVVLLTVCLEGCSS) is a signal peptide. The residue at position 24 (glutamine 24) is a Pyrrolidone carboxylic acid. Glycine 33 carries the glycine amide modification.

It belongs to the GnRH family. The precursor is cleaved by ACE, which removes the Gly-Lys-Arg peptide at the C-terminus, leading to mature hormone. The mature form of Gonadoliberin-1 is also cleaved and degraded by ACE. In terms of tissue distribution, central nervous system.

The protein resides in the secreted. Functionally, stimulates the secretion of gonadotropins; it stimulates the secretion of both luteinizing and follicle-stimulating hormones. The polypeptide is Progonadoliberin-1 (Gnrh1) (Rattus norvegicus (Rat)).